A 277-amino-acid polypeptide reads, in one-letter code: uncharacterized protein (277 aa).

The tract at residues 1 to 20 (MVTTSPPPTLTNSVQPHPTT) is disordered.

This is an uncharacterized protein from Acidianus convivator (ATV).